Reading from the N-terminus, the 431-residue chain is tRNA(Ile)-lysidine synthase (431 aa).

ATP is bound at residue 19 to 24 (STGIDS).

The protein belongs to the tRNA(Ile)-lysidine synthase family.

It is found in the cytoplasm. The catalysed reaction is cytidine(34) in tRNA(Ile2) + L-lysine + ATP = lysidine(34) in tRNA(Ile2) + AMP + diphosphate + H(+). Functionally, ligates lysine onto the cytidine present at position 34 of the AUA codon-specific tRNA(Ile) that contains the anticodon CAU, in an ATP-dependent manner. Cytidine is converted to lysidine, thus changing the amino acid specificity of the tRNA from methionine to isoleucine. The sequence is that of tRNA(Ile)-lysidine synthase from Staphylococcus aureus (strain MRSA252).